A 519-amino-acid polypeptide reads, in one-letter code: MSDLFEDPAPSRNTPEFTVSELSGAVKRVIEGEFGLVRVRGEIGRVSRPASGHLYFDLKDDRAVMAAICWKGQAGRLSVRPEEGMEVVATGRMTTFPGQSKYQIIVEDMAPAGAGALMAMLEKRRAALAAEGLFDAARKHPLPFLPRVIGVVTSPSGAVIRDILHRLRDRFPSHVLIWPVAVQGEKCAPEVAAAIRGFNALPEGGPIPRPDLLIVARGGGSLEDLWGFNEEIVVRAAAESRIPLISAVGHETDTTLIDHAADRRAPTPTAAAEMAVPVRLELLAGLDGQVARLSRCAAETIRRRDQRLRDLARALPRLESLVAGPSQRFDLWSGRLSGALGQSVAARRARLEPLGAHLRPRLLADLVARQKDRLGDRTRSLETCLGRRAERARDRFDALSARLAPAFARLIAETERATRRDAATLGTLAARLDAAPEARLARLSDRLEALDRLRQTLGYRETLKRGYAVVRADGAVLTTKAEAGAAAMLEIEFQDGRLSVGRGKTRKPKEEPPAQGSLL.

The tract at residues 500–519 (VGRGKTRKPKEEPPAQGSLL) is disordered.

The protein belongs to the XseA family. Heterooligomer composed of large and small subunits.

It is found in the cytoplasm. It carries out the reaction Exonucleolytic cleavage in either 5'- to 3'- or 3'- to 5'-direction to yield nucleoside 5'-phosphates.. Bidirectionally degrades single-stranded DNA into large acid-insoluble oligonucleotides, which are then degraded further into small acid-soluble oligonucleotides. This Cereibacter sphaeroides (strain ATCC 17023 / DSM 158 / JCM 6121 / CCUG 31486 / LMG 2827 / NBRC 12203 / NCIMB 8253 / ATH 2.4.1.) (Rhodobacter sphaeroides) protein is Exodeoxyribonuclease 7 large subunit.